The following is a 162-amino-acid chain: Phosphopantetheine adenylyltransferase (162 aa).

Thr-9 contacts substrate. Residues 9–10 (TF) and His-17 each bind ATP. Residues Lys-41, Leu-77, and Arg-91 each coordinate substrate. ATP contacts are provided by residues 92 to 94 (GLR), Glu-102, and 127 to 133 (RQAIASK).

The protein belongs to the bacterial CoaD family. Homohexamer. Mg(2+) serves as cofactor.

The protein localises to the cytoplasm. It catalyses the reaction (R)-4'-phosphopantetheine + ATP + H(+) = 3'-dephospho-CoA + diphosphate. It functions in the pathway cofactor biosynthesis; coenzyme A biosynthesis; CoA from (R)-pantothenate: step 4/5. Reversibly transfers an adenylyl group from ATP to 4'-phosphopantetheine, yielding dephospho-CoA (dPCoA) and pyrophosphate. This is Phosphopantetheine adenylyltransferase from Cereibacter sphaeroides (strain ATCC 17029 / ATH 2.4.9) (Rhodobacter sphaeroides).